Reading from the N-terminus, the 433-residue chain is NADH-quinone oxidoreductase subunit D (433 aa).

This sequence belongs to the complex I 49 kDa subunit family. As to quaternary structure, NDH-1 is composed of 14 different subunits. Subunits NuoB, C, D, E, F, and G constitute the peripheral sector of the complex.

The protein resides in the cell membrane. The enzyme catalyses a quinone + NADH + 5 H(+)(in) = a quinol + NAD(+) + 4 H(+)(out). Functionally, NDH-1 shuttles electrons from NADH, via FMN and iron-sulfur (Fe-S) centers, to quinones in the respiratory chain. The immediate electron acceptor for the enzyme in this species is believed to be a menaquinone. Couples the redox reaction to proton translocation (for every two electrons transferred, four hydrogen ions are translocated across the cytoplasmic membrane), and thus conserves the redox energy in a proton gradient. This chain is NADH-quinone oxidoreductase subunit D, found in Cutibacterium acnes (strain DSM 16379 / KPA171202) (Propionibacterium acnes).